Here is a 236-residue protein sequence, read N- to C-terminus: Large ribosomal subunit protein uL1 (236 aa).

It belongs to the universal ribosomal protein uL1 family. Part of the 50S ribosomal subunit.

Its function is as follows. Binds directly to 23S rRNA. The L1 stalk is quite mobile in the ribosome, and is involved in E site tRNA release. Protein L1 is also a translational repressor protein, it controls the translation of the L11 operon by binding to its mRNA. The sequence is that of Large ribosomal subunit protein uL1 from Acidobacterium capsulatum (strain ATCC 51196 / DSM 11244 / BCRC 80197 / JCM 7670 / NBRC 15755 / NCIMB 13165 / 161).